Reading from the N-terminus, the 200-residue chain is Holliday junction branch migration complex subunit RuvA (200 aa).

Residues 1–64 form a domain I region; that stretch reads MYAYFRGELI…EDLMQLYGFI (64 aa). The tract at residues 65 to 143 is domain II; it reads EEEERQLFLL…KLQQTRPGKT (79 aa). The tract at residues 144–154 is flexible linker; it reads AGAGSVASLSE. Residues 154-200 form a domain III region; that stretch reads EDALQALMTLGFSRASAQQAVTRALLSAENPGVEDIVREALQNIRNH.

Belongs to the RuvA family. As to quaternary structure, homotetramer. Forms an RuvA(8)-RuvB(12)-Holliday junction (HJ) complex. HJ DNA is sandwiched between 2 RuvA tetramers; dsDNA enters through RuvA and exits via RuvB. An RuvB hexamer assembles on each DNA strand where it exits the tetramer. Each RuvB hexamer is contacted by two RuvA subunits (via domain III) on 2 adjacent RuvB subunits; this complex drives branch migration. In the full resolvosome a probable DNA-RuvA(4)-RuvB(12)-RuvC(2) complex forms which resolves the HJ.

It localises to the cytoplasm. Functionally, the RuvA-RuvB-RuvC complex processes Holliday junction (HJ) DNA during genetic recombination and DNA repair, while the RuvA-RuvB complex plays an important role in the rescue of blocked DNA replication forks via replication fork reversal (RFR). RuvA specifically binds to HJ cruciform DNA, conferring on it an open structure. The RuvB hexamer acts as an ATP-dependent pump, pulling dsDNA into and through the RuvAB complex. HJ branch migration allows RuvC to scan DNA until it finds its consensus sequence, where it cleaves and resolves the cruciform DNA. This Prosthecochloris aestuarii (strain DSM 271 / SK 413) protein is Holliday junction branch migration complex subunit RuvA.